The following is a 242-amino-acid chain: Carboxy-S-adenosyl-L-methionine synthase (242 aa).

S-adenosyl-L-methionine contacts are provided by residues Tyr39, 64–66, 89–90, 117–118, Asn132, and Arg199; these read GCS, DN, and DI.

This sequence belongs to the class I-like SAM-binding methyltransferase superfamily. Cx-SAM synthase family. Homodimer.

The catalysed reaction is prephenate + S-adenosyl-L-methionine = carboxy-S-adenosyl-L-methionine + 3-phenylpyruvate + H2O. Its function is as follows. Catalyzes the conversion of S-adenosyl-L-methionine (SAM) to carboxy-S-adenosyl-L-methionine (Cx-SAM). The protein is Carboxy-S-adenosyl-L-methionine synthase of Aliivibrio fischeri (strain ATCC 700601 / ES114) (Vibrio fischeri).